The primary structure comprises 892 residues: Putative GTP diphosphokinase RSH1, chloroplastic (892 aa).

The N-terminal 52 residues, 1–52, are a transit peptide targeting the chloroplast; sequence MQPPTGAVSGSSSSSLECVSSCRTSWRGGGRPYECSVLSCAWNAPRALTGAL. Residues 184–291 form the HD domain; that stretch reads FIIHPVEVAR…VKLADRLHNM (108 aa). Positions 574–637 constitute a TGS domain; the sequence is LGSRVFVFTP…ANAEVVEIII (64 aa). In terms of domain architecture, ACT spans 809-880; the sequence is WLCIVCVDRK…MILGVLGWSV (72 aa).

The protein belongs to the RelA/SpoT family.

The protein resides in the plastid. It is found in the chloroplast. It catalyses the reaction GTP + ATP = guanosine 3'-diphosphate 5'-triphosphate + AMP. May be involved in a rapid plant ppGpp (guanosine 3'-diphosphate 5'-diphosphate)-mediated response to pathogens and other stresses. In Oryza sativa subsp. japonica (Rice), this protein is Putative GTP diphosphokinase RSH1, chloroplastic (RSH1).